A 114-amino-acid polypeptide reads, in one-letter code: Class I hydrophobin SC16 (114 aa).

The first 17 residues, 1 to 17 (MRFFATLVLALPALAMA), serve as a signal peptide directing secretion. 4 cysteine pairs are disulfide-bonded: cysteine 33-cysteine 93, cysteine 40-cysteine 87, cysteine 41-cysteine 74, and cysteine 94-cysteine 107. Asparagine 42 carries N-linked (GlcNAc...) asparagine glycosylation.

It belongs to the fungal hydrophobin family. In terms of assembly, self-assembles to form functional amyloid fibrils called rodlets. Self-assembly into fibrillar rodlets occurs spontaneously at hydrophobic:hydrophilic interfaces and the rodlets further associate laterally to form amphipathic monolayers.

Its subcellular location is the secreted. The protein resides in the cell wall. Aerial growth, conidiation, and dispersal of filamentous fungi in the environment rely upon a capability of their secreting small amphipathic proteins called hydrophobins (HPBs) with low sequence identity. Class I can self-assemble into an outermost layer of rodlet bundles on aerial cell surfaces, conferring cellular hydrophobicity that supports fungal growth, development and dispersal; whereas Class II form highly ordered films at water-air interfaces through intermolecular interactions but contribute nothing to the rodlet structure. This is Class I hydrophobin SC16 from Schizophyllum commune (strain H4-8 / FGSC 9210) (Split gill fungus).